A 178-amino-acid polypeptide reads, in one-letter code: Inorganic pyrophosphatase (178 aa).

Residues Lys30, Arg44, and Tyr56 each contribute to the substrate site. Positions 66, 71, and 103 each coordinate Mg(2+). Position 142 (Tyr142) interacts with substrate.

The protein belongs to the PPase family. Homohexamer. It depends on Mg(2+) as a cofactor.

The protein localises to the cytoplasm. The catalysed reaction is diphosphate + H2O = 2 phosphate + H(+). In terms of biological role, catalyzes the hydrolysis of inorganic pyrophosphate (PPi) forming two phosphate ions. This is Inorganic pyrophosphatase from Xylella fastidiosa (strain 9a5c).